We begin with the raw amino-acid sequence, 298 residues long: uncharacterized protein (298 aa).

8 helical membrane passes run 5–25, 52–72, 105–125, 138–158, 163–183, 208–228, 236–256, and 273–293; these read SLATLFALLILATLINRFLLW, VISGPRWMTLTFFALISFLAL, LFLLFIPLAGFLILATGQVLV, IFWGWIMTVFALSHAAWLLML, IQGGALLVLFLLALTESNDIA, GLMGGVITIMIASLIIGPLLT, LLAGLLIGISGFCGDVVMSAI, and GGLLDRIDSLIFTAPVFFYFI.

Belongs to the CDS family.

It localises to the cell membrane. This is an uncharacterized protein from Escherichia coli (strain K12).